The primary structure comprises 95 residues: Aspartyl/glutamyl-tRNA(Asn/Gln) amidotransferase subunit C (95 aa).

The protein belongs to the GatC family. Heterotrimer of A, B and C subunits.

It catalyses the reaction L-glutamyl-tRNA(Gln) + L-glutamine + ATP + H2O = L-glutaminyl-tRNA(Gln) + L-glutamate + ADP + phosphate + H(+). The catalysed reaction is L-aspartyl-tRNA(Asn) + L-glutamine + ATP + H2O = L-asparaginyl-tRNA(Asn) + L-glutamate + ADP + phosphate + 2 H(+). Its function is as follows. Allows the formation of correctly charged Asn-tRNA(Asn) or Gln-tRNA(Gln) through the transamidation of misacylated Asp-tRNA(Asn) or Glu-tRNA(Gln) in organisms which lack either or both of asparaginyl-tRNA or glutaminyl-tRNA synthetases. The reaction takes place in the presence of glutamine and ATP through an activated phospho-Asp-tRNA(Asn) or phospho-Glu-tRNA(Gln). This chain is Aspartyl/glutamyl-tRNA(Asn/Gln) amidotransferase subunit C, found in Rhizobium etli (strain CIAT 652).